Consider the following 200-residue polypeptide: Imidazoleglycerol-phosphate dehydratase (200 aa).

Belongs to the imidazoleglycerol-phosphate dehydratase family.

It localises to the cytoplasm. It catalyses the reaction D-erythro-1-(imidazol-4-yl)glycerol 3-phosphate = 3-(imidazol-4-yl)-2-oxopropyl phosphate + H2O. It functions in the pathway amino-acid biosynthesis; L-histidine biosynthesis; L-histidine from 5-phospho-alpha-D-ribose 1-diphosphate: step 6/9. In Chlorobium luteolum (strain DSM 273 / BCRC 81028 / 2530) (Pelodictyon luteolum), this protein is Imidazoleglycerol-phosphate dehydratase.